The sequence spans 259 residues: Putative protein-disulfide oxidoreductase RBE_1288 (259 aa).

The first 20 residues, 1 to 20, serve as a signal peptide directing secretion; it reads MRNSFITLIFLLLLSGCSEE. A disordered region spans residues 25-54; the sequence is VEQESSESITPAQASTSDENNNQTTETTTP. The span at 33–42 shows a compositional bias: polar residues; sequence ITPAQASTSD. A compositionally biased stretch (low complexity) spans 43-54; the sequence is ENNNQTTETTTP. Residues 47–251 enclose the Thioredoxin domain; that stretch reads QTTETTTPAV…ISAAIDKAIE (205 aa). The cysteines at positions 104 and 107 are disulfide-linked.

This sequence belongs to the thioredoxin family. DsbA subfamily.

It is found in the periplasm. Functionally, may be required for disulfide bond formation in some proteins. The protein is Putative protein-disulfide oxidoreductase RBE_1288 of Rickettsia bellii (strain RML369-C).